The following is a 694-amino-acid chain: MEDRSEEGGDHSEMPSAPSTPPSKRKSKFAGFGKFFKPWKWRKRKSSDSFRETSEVLERKISTRKPREELIKRGLLVEVPEEDGSIPSESPPLRNGHMSVEPANPPEDSGGLKRKTRPDSTGPRPKSGETTVQPCATAEVAPLEPHATAEVSPVQPQASAEVTPVQPLPVSEVAPMQPLPVNEVAPMQPLPVNEVAPKQPHHVSEVASVVSRPTSEVAPVQKVSRDFSKQPLLPPKRPLSISTSVTQESAVAGQKSDSSNRLQSSAPVPTPRTIHPPASSKQPPVPPPKPQNRNSNPLMAELSLALAGSPLSPAGSRPSPPLPPKRAMPPSTDAVTNKENALGPASLPPTPANEIITPSPPSPPASSHIPVSNPPVPPLTLAPPYTEVEKEQSASPIPLHIRIQQALNSPQPLPLLDSSQRAQSLLFMQNDMGPSEEGTRVRSLPVTIELLKVPDDEDDESLEDESLSPESSESHTSKVYIGDVPSVTVIPSYLPTCVQEEEEGGVSDTDSEGPVLYRDDEEEEEEEETSALANKVKRKDTLAMKLSGRMASEDSNSEFPQRSREEWNQIRQDIGTQLNRRLSQRPTAEELEQRNILQKNEADRLAEKKEIKRRLTRKLSQRPTVAELVERKILRFNEYVEATDAHDYDRRADKPWTRLTPADKAAIRKELNEFKSTEMAVHAESKHFTRFHRP.

Basic and acidic residues-rich tracts occupy residues 1 to 13 and 46 to 72; these read MEDR…DHSE and SSDS…ELIK. 5 disordered regions span residues 1–29, 42–169, 192–403, 426–445, and 450–572; these read MEDR…KSKF, RKRK…QPLP, VNEV…HIRI, LFMQ…RSLP, and LLKV…QIRQ. The stretch at 55–80 is one RPEL 1 repeat; sequence EVLERKISTRKPREELIKRGLLVEVP. Polar residues predominate over residues 240–267; the sequence is SISTSVTQESAVAGQKSDSSNRLQSSAP. Residues 300–317 show a composition bias toward low complexity; it reads AELSLALAGSPLSPAGSR. Pro residues-rich tracts occupy residues 318–327 and 372–381; these read PSPPLPPKRA and SNPPVPPLTL. Acidic residues-rich tracts occupy residues 455–467, 499–511, and 519–529; these read DDED…DESL, QEEE…DTDS, and DDEEEEEEEET. RPEL repeat units lie at residues 576 to 601 and 613 to 638; these read TQLN…QKNE and RRLT…RFNE.

This sequence belongs to the phosphatase and actin regulator family. In terms of assembly, binds ppp1ca and actin.

The protein resides in the cytoplasm. It localises to the cell projection. It is found in the lamellipodium. Functionally, regulator of protein phosphatase 1 (PP1) required for neural tube and optic fissure closure, and enteric neural crest cell (ENCCs) migration during development. Acts as an activator of PP1. During neural tube closure, localizes to the ventral neural tube and activates PP1, leading to down-regulate cell proliferation within cranial neural tissue and the neural retina. Also acts as a regulator of migration of enteric neural crest cells (ENCCs) by activating PP1, leading to repression of the integrin signaling through the rho/rock pathway. The polypeptide is Phosphatase and actin regulator 4-A (phactr4-a) (Xenopus laevis (African clawed frog)).